The sequence spans 443 residues: ATP-dependent protease ATPase subunit HslU (443 aa).

Residues Ile18, 60-65 (GVGKTE), Asp256, Glu321, and Arg393 contribute to the ATP site.

The protein belongs to the ClpX chaperone family. HslU subfamily. As to quaternary structure, a double ring-shaped homohexamer of HslV is capped on each side by a ring-shaped HslU homohexamer. The assembly of the HslU/HslV complex is dependent on binding of ATP.

It is found in the cytoplasm. ATPase subunit of a proteasome-like degradation complex; this subunit has chaperone activity. The binding of ATP and its subsequent hydrolysis by HslU are essential for unfolding of protein substrates subsequently hydrolyzed by HslV. HslU recognizes the N-terminal part of its protein substrates and unfolds these before they are guided to HslV for hydrolysis. The sequence is that of ATP-dependent protease ATPase subunit HslU from Tolumonas auensis (strain DSM 9187 / NBRC 110442 / TA 4).